A 266-amino-acid chain; its full sequence is Glucosamine-6-phosphate deaminase (266 aa).

The active-site Proton acceptor; for enolization step is the D72. The active-site For ring-opening step is D141. H143 acts as the Proton acceptor; for ring-opening step in catalysis. Residue E148 is the For ring-opening step of the active site.

This sequence belongs to the glucosamine/galactosamine-6-phosphate isomerase family. NagB subfamily. In terms of assembly, homohexamer.

The enzyme catalyses alpha-D-glucosamine 6-phosphate + H2O = beta-D-fructose 6-phosphate + NH4(+). It functions in the pathway amino-sugar metabolism; N-acetylneuraminate degradation; D-fructose 6-phosphate from N-acetylneuraminate: step 5/5. Its activity is regulated as follows. Allosterically activated by N-acetylglucosamine 6-phosphate (GlcNAc6P). Catalyzes the reversible isomerization-deamination of glucosamine 6-phosphate (GlcN6P) to form fructose 6-phosphate (Fru6P) and ammonium ion. The sequence is that of Glucosamine-6-phosphate deaminase from Aeromonas hydrophila subsp. hydrophila (strain ATCC 7966 / DSM 30187 / BCRC 13018 / CCUG 14551 / JCM 1027 / KCTC 2358 / NCIMB 9240 / NCTC 8049).